Reading from the N-terminus, the 194-residue chain is Recombination protein RecR (194 aa).

The C4-type zinc finger occupies 52–67 (CTECRTFTEEEVCHIC). The 96-residue stretch at 76-171 (GQICVVESPA…EASRIAHGVP (96 aa)) folds into the Toprim domain.

The protein belongs to the RecR family.

Functionally, may play a role in DNA repair. It seems to be involved in an RecBC-independent recombinational process of DNA repair. It may act with RecF and RecO. The polypeptide is Recombination protein RecR (Vibrio campbellii (strain ATCC BAA-1116)).